The sequence spans 770 residues: Capsid protein (770 aa).

2 disordered regions span residues Gln645–Ser682 and Trp697–Val717. The segment covering Arg646–Ile656 has biased composition (polar residues). The span at Arg666–Glu681 shows a compositional bias: basic and acidic residues. Residues Glu703–Val717 are compositionally biased toward low complexity.

The protein belongs to the anelloviridae capsid protein family.

It is found in the virion. Its function is as follows. Self-assembles to form an icosahedral capsid with a T=1 symmetry, about 30 nm in diameter, and consisting of 60 capsid proteins. The capsid encapsulates the genomic DNA. Capsid protein is involved in attachment and entry into the host cell. The chain is Capsid protein from Homo sapiens (Human).